We begin with the raw amino-acid sequence, 100 residues long: Cytochrome c2 iso-1 (100 aa).

Residues C11, C14, H15, and M76 each coordinate heme c.

This sequence belongs to the cytochrome c family. In terms of processing, binds 1 heme c group covalently per subunit.

In terms of biological role, cytochrome c2 is found mainly in purple, non-sulfur, photosynthetic bacteria where it functions as the electron donor to the oxidized bacteriochlorophyll in the photophosphorylation pathway. However, it may also have a role in the respiratory chain and is found in some non-photosynthetic bacteria. The protein is Cytochrome c2 iso-1 of Magnetospirillum molischianum (Rhodospirillum molischianum).